The primary structure comprises 177 residues: Shikimate kinase (177 aa).

14–19 contacts ATP; sequence GSGKST. S18 contacts Mg(2+). Residues D36, R60, and G82 each coordinate substrate. R120 serves as a coordination point for ATP. R139 provides a ligand contact to substrate.

It belongs to the shikimate kinase family. Monomer. The cofactor is Mg(2+).

It localises to the cytoplasm. It catalyses the reaction shikimate + ATP = 3-phosphoshikimate + ADP + H(+). The protein operates within metabolic intermediate biosynthesis; chorismate biosynthesis; chorismate from D-erythrose 4-phosphate and phosphoenolpyruvate: step 5/7. Its function is as follows. Catalyzes the specific phosphorylation of the 3-hydroxyl group of shikimic acid using ATP as a cosubstrate. This is Shikimate kinase from Gloeobacter violaceus (strain ATCC 29082 / PCC 7421).